Here is a 1311-residue protein sequence, read N- to C-terminus: Protein PARALOG OF AIPP2 (1311 aa).

Disordered regions lie at residues 1–21 (MADRRVGKRQMGQRGFSKVES), 114–141 (ISDDSGAAAMTSKPSLSGSRMKHKVSAS), and 178–280 (GNKD…EMVE). Positions 213-240 (NHDDRVSSEKGNFKEKSRPGGNKERQEP) are enriched in basic and acidic residues. Positions 258–270 (SKSSSSNSSAVSE) are enriched in low complexity. The PHD-type zinc finger occupies 283–334 (VKVCDICGDAGREDLLAICSGCSDGAEHTYCMREMLDEVPEGDWLCEECAEE). Residues cysteine 286, cysteine 289, cysteine 301, cysteine 304, histidine 310, cysteine 313, cysteine 328, and cysteine 331 each contribute to the Zn(2+) site. A coiled-coil region spans residues 328–348 (CEECAEEAEKQKQEAKRKRET). Disordered stretches follow at residues 369–390 (PDAKRQVVEASTGSPKKSILPR), 411–440 (NHQTSFSDDTESARSAGSQLQPPKGAFLKS), 460–701 (HPRQ…EDLN), 975–1050 (TNPQ…PSKK), 1059–1078 (EAGVNHIPPQVTGSNSGDSL), 1087–1138 (EQEL…NPAN), 1152–1186 (NDGLCEGSPNKKLKTENGSSSLCRDTSGHDSGIMK), and 1249–1311 (LSRS…DLPR). A compositionally biased stretch (polar residues) spans 411–431 (NHQTSFSDDTESARSAGSQLQ). Residues 460–472 (HPRQKTGKEDTAL) are compositionally biased toward basic and acidic residues. The span at 487-502 (PSRTTDAGNSGGSDSQ) shows a compositional bias: polar residues. A compositionally biased stretch (basic and acidic residues) spans 512–528 (HSQEGKSLKQVKDRNRE). Positions 529–552 (ANASASSIDQKLKSRGNSSVSHAN) are enriched in polar residues. Over residues 553 to 566 (NNRDLKGLQSDGKR) the composition is skewed to basic and acidic residues. Positions 569–607 (LTKQVSNLSRNRLENSVVSGGDISTNEKCSASEQSSSQA) are enriched in polar residues. The segment covering 640-653 (VPREVGKKSKEAFS) has biased composition (basic and acidic residues). Polar residues-rich tracts occupy residues 668 to 694 (PSSQKGGQTAESSDTSGVSDSDLSTTK), 977 to 988 (PQKNTSLPTSNV), and 1014 to 1025 (LRESSSNGIETR). A compositionally biased stretch (basic and acidic residues) spans 1026–1050 (NGTDARSHENPNNRESSIERSPSKK). Positions 1087–1096 (EQELGGRKDL) are enriched in basic and acidic residues. Over residues 1250–1263 (SRSSNSGEQSNNSM) the composition is skewed to polar residues. A coiled-coil region spans residues 1256–1276 (GEQSNNSMNKEKQKADEEEED). Low complexity predominate over residues 1280 to 1289 (VAASLSLSLS).

As to quaternary structure, part of the BAH-PHD bivalent histone reader complex that contains AIPP2, PAIPP2 and AIPP3/BDT1; the BAH-PHD module associates with CPL2 to form the BAH-PHD-CPL2 complex (BPC) for transcriptional repression. Binds directly to AIPP3/BDT1 and CPL2, but not to AIPP2. In terms of tissue distribution, expressed ubiquitously.

Functionally, together with AIPP2 and AIPP3/BDT1, cooperates to form a BAH-PHD bivalent histone reader complex able to read histone H3 lysine 27 trimethylation (H3K27me3) and low-methylated H3K4 histone marks in order to regulate transcription, especially to prevent early flowering; promotes AIPP3/BDT1 binding to H3K27me3. CPL2 is subsequently recruited to form a BAH-PHD-CPL2 complex (BPC) in order to silence several H3K27me3 and low-methylated H3K4 enriched loci, including AGO5, via the phosphorylation state-dependent inhibition of Pol II release from the transcriptional start site (e.g. Ser5P-Pol II dephosphorylation). The BPC complex represses flowering by inhibiting the expression of several genes, including AGL6, FT, FUL and SOC1. The polypeptide is Protein PARALOG OF AIPP2 (Arabidopsis thaliana (Mouse-ear cress)).